The sequence spans 573 residues: 2-succinyl-5-enolpyruvyl-6-hydroxy-3-cyclohexene-1-carboxylate synthase (573 aa).

This sequence belongs to the TPP enzyme family. MenD subfamily. In terms of assembly, homodimer. Requires Mg(2+) as cofactor. It depends on Mn(2+) as a cofactor. The cofactor is thiamine diphosphate.

The enzyme catalyses isochorismate + 2-oxoglutarate + H(+) = 5-enolpyruvoyl-6-hydroxy-2-succinyl-cyclohex-3-ene-1-carboxylate + CO2. It functions in the pathway quinol/quinone metabolism; 1,4-dihydroxy-2-naphthoate biosynthesis; 1,4-dihydroxy-2-naphthoate from chorismate: step 2/7. The protein operates within quinol/quinone metabolism; menaquinone biosynthesis. Functionally, catalyzes the thiamine diphosphate-dependent decarboxylation of 2-oxoglutarate and the subsequent addition of the resulting succinic semialdehyde-thiamine pyrophosphate anion to isochorismate to yield 2-succinyl-5-enolpyruvyl-6-hydroxy-3-cyclohexene-1-carboxylate (SEPHCHC). The sequence is that of 2-succinyl-5-enolpyruvyl-6-hydroxy-3-cyclohexene-1-carboxylate synthase from Shewanella baltica (strain OS185).